The chain runs to 471 residues: Venom prothrombin activator vestarin-D2 (471 aa).

The first 20 residues, 1 to 20, serve as a signal peptide directing secretion; it reads MAPQLLLCLILTFLWSLPEA. Residues 21–40 constitute a propeptide that is removed on maturation; that stretch reads ESNVFLKSNVANRFLQRTKR. The region spanning 41 to 86 is the Gla domain; that stretch reads ANSIFEEIRPGNIERECVEEKCSKEEAREVFQDNEKTEAFWTVYVD. 10 positions are modified to 4-carboxyglutamate: glutamate 46, glutamate 47, glutamate 54, glutamate 56, glutamate 59, glutamate 60, glutamate 65, glutamate 66, glutamate 69, and glutamate 75. Residues cysteine 57 and cysteine 62 are joined by a disulfide bond. Residues 86 to 122 form the EGF-like 1; calcium-binding domain; the sequence is DGDQCLSNPCHYRGTCKDGIGSYTCTCLPGYEGKNCE. Cystine bridges form between cysteine 90-cysteine 101, cysteine 95-cysteine 110, cysteine 112-cysteine 121, cysteine 129-cysteine 140, cysteine 136-cysteine 149, cysteine 151-cysteine 164, cysteine 172-cysteine 333, cysteine 233-cysteine 238, cysteine 381-cysteine 395, and cysteine 406-cysteine 434. O-linked (Hex...) serine glycosylation is present at serine 92. The EGF-like 2 domain occupies 129–164; that stretch reads CRLFNGNCWHFCKTVQNDTQCSCAEGYRLGVDGFSC. Positions 182-226 are cleaved as a propeptide — activation peptide; the sequence is REASLPDFHFSDDYDAIDENNLVETVQSQSATLLKKSDNPSPDIR. The 232-residue stretch at 227–458 folds into the Peptidase S1 domain; sequence IVSGLDCKLG…FIPWIKTIMR (232 aa). Histidine 268 serves as the catalytic Charge relay system. Asparagine 271 carries N-linked (GlcNAc...) asparagine glycosylation. Aspartate 313 (charge relay system) is an active-site residue. Serine 410 functions as the Charge relay system in the catalytic mechanism.

Belongs to the peptidase S1 family. Snake venom subfamily. Heterodimer of a light chain and a heavy chain; disulfide-linked. The vitamin K-dependent, enzymatic carboxylation of some glutamate residues allows the modified protein to bind calcium. As to expression, expressed by the venom gland.

It is found in the secreted. The enzyme catalyses Selective cleavage of Arg-|-Thr and then Arg-|-Ile bonds in prothrombin to form thrombin.. Its function is as follows. Snake prothrombin activator that attacks the hemostatic system of prey. This protein is functionally similar to blood coagulation factor Xa. In Demansia vestigiata (Lesser black whip snake), this protein is Venom prothrombin activator vestarin-D2.